Consider the following 278-residue polypeptide: Probable cytochrome c oxidase subunit 3 (278 aa).

A run of 6 helical transmembrane segments spans residues 21-41 (PWPI…ISSM), 46-66 (FNMY…YSWW), 89-109 (IGMV…FASF), 174-194 (CVTA…MQVY), 212-232 (FYLA…FLIV), and 256-276 (AWYW…VYIL).

The protein belongs to the cytochrome c oxidase subunit 3 family.

It localises to the cell membrane. It catalyses the reaction 4 Fe(II)-[cytochrome c] + O2 + 8 H(+)(in) = 4 Fe(III)-[cytochrome c] + 2 H2O + 4 H(+)(out). The polypeptide is Probable cytochrome c oxidase subunit 3 (ctaE) (Rickettsia prowazekii (strain Madrid E)).